Here is a 352-residue protein sequence, read N- to C-terminus: Phosphate acyltransferase (352 aa).

Residues 328–339 (ESFPGDAREREG) are compositionally biased toward basic and acidic residues. A disordered region spans residues 328-352 (ESFPGDAREREGAPAPDAGTERVAS).

Belongs to the PlsX family. In terms of assembly, homodimer. Probably interacts with PlsY.

The protein resides in the cytoplasm. The enzyme catalyses a fatty acyl-[ACP] + phosphate = an acyl phosphate + holo-[ACP]. The protein operates within lipid metabolism; phospholipid metabolism. Functionally, catalyzes the reversible formation of acyl-phosphate (acyl-PO(4)) from acyl-[acyl-carrier-protein] (acyl-ACP). This enzyme utilizes acyl-ACP as fatty acyl donor, but not acyl-CoA. The chain is Phosphate acyltransferase from Citrifermentans bemidjiense (strain ATCC BAA-1014 / DSM 16622 / JCM 12645 / Bem) (Geobacter bemidjiensis).